We begin with the raw amino-acid sequence, 570 residues long: Nucleoprotein (570 aa).

The interval 54 to 236 (LRKTKRTDDD…ITKEESSINI (183 aa)) is binding site for the cap structure m7GTP. Residues 332 to 356 (DLTKKPDAVPEPGAAPRPAERKGQN) are disordered. Mg(2+)-binding residues include aspartate 386 and glutamate 388. Mn(2+) is bound by residues aspartate 386 and glutamate 388. Zn(2+)-binding residues include glutamate 396, cysteine 503, histidine 506, and cysteine 531. Position 535 (aspartate 535) interacts with Mg(2+). A Mn(2+)-binding site is contributed by aspartate 535.

This sequence belongs to the arenaviridae nucleocapsid protein family. Homomultimerizes to form the nucleocapsid. Binds to viral genomic RNA. Interacts with glycoprotein G2. Interacts with protein Z; this interaction probably directs the encapsidated genome to budding sites. Interacts with protein L; this interaction does not interfere with Z-L interaction. Interacts with host IKBKE (via Protein kinase domain); the interaction inhibits IKBKE kinase activity.

It is found in the virion. It localises to the host cytoplasm. In terms of biological role, encapsidates the genome, protecting it from nucleases. The encapsidated genomic RNA is termed the nucleocapsid (NC). Serves as template for viral transcription and replication. The increased presence of protein N in host cell does not seem to trigger the switch from transcription to replication as observed in other negative strain RNA viruses. Through the interaction with host IKBKE, strongly inhibits the phosphorylation and nuclear translocation of host IRF3, a protein involved in interferon activation pathway, leading to the inhibition of interferon-beta and IRF3-dependent promoters activation. Also encodes a functional 3'-5' exoribonuclease that degrades preferentially dsRNA substrates and thereby participates in the suppression of interferon induction. The protein is Nucleoprotein of Artibeus (neotropical fruit bats).